Consider the following 247-residue polypeptide: Orotidine 5'-phosphate decarboxylase (247 aa).

Substrate contacts are provided by residues aspartate 21, lysine 43, 70 to 79 (DMKFHDIPNT), threonine 129, arginine 190, glutamine 199, glycine 219, and arginine 220. Residue lysine 72 is the Proton donor of the active site.

Belongs to the OMP decarboxylase family. Type 1 subfamily. As to quaternary structure, homodimer.

It catalyses the reaction orotidine 5'-phosphate + H(+) = UMP + CO2. Its pathway is pyrimidine metabolism; UMP biosynthesis via de novo pathway; UMP from orotate: step 2/2. Functionally, catalyzes the decarboxylation of orotidine 5'-monophosphate (OMP) to uridine 5'-monophosphate (UMP). The protein is Orotidine 5'-phosphate decarboxylase of Chromobacterium violaceum (strain ATCC 12472 / DSM 30191 / JCM 1249 / CCUG 213 / NBRC 12614 / NCIMB 9131 / NCTC 9757 / MK).